Reading from the N-terminus, the 1023-residue chain is Transmembrane protein 132A (1023 aa).

The N-terminal stretch at 1–35 (MCARMAGRTTAAPRGPYGPWLCLLVALALDVVRVD) is a signal peptide. Residues 36-852 (CGQAPLDPVY…VTELELGMYA (817 aa)) lie on the Extracellular side of the membrane. A disordered region spans residues 212 to 246 (AAEGPGGCGSGEENDPGEQALPVGGVELRPADPPQ). A glycan (N-linked (GlcNAc...) asparagine) is linked at Asn-280. 2 disordered regions span residues 512–533 (WRVP…DEAE) and 766–839 (LPPA…MVPA). Residues 515–527 (PGPAEGPAEPAAE) are compositionally biased toward low complexity. At Ser-529 the chain carries Phosphoserine; by FAM20C. A binds to HSPA5/GRP78 region spans residues 611 to 916 (IEVRSPLSDS…RQLDRQSPGP (306 aa)). The segment at 671–1023 (LPAPKQEVAL…NYMERIRGSS (353 aa)) is confers cellular localization similar to full-length form. A compositionally biased stretch (low complexity) spans 778 to 790 (SSPAWSPPATEAT). Over residues 809–823 (GKFERAEEEARKEET) the composition is skewed to basic and acidic residues. Positions 824-836 (EAREEEEEEEEEM) are enriched in acidic residues. The chain crosses the membrane as a helical span at residues 853–873 (LLGVFCVAIFIFLVNGVVFVL). Residues 874-1023 (RYQRKEPPDS…NYMERIRGSS (150 aa)) lie on the Cytoplasmic side of the membrane. The segment at 905–961 (LSRQLDRQSPGPPKGEGSCPCESGGGGEAPTLAPGPPGGTTSSSSTLARKEAGGRRK) is disordered.

This sequence belongs to the TMEM132 family. In terms of assembly, interacts with HSPA5/GRP78.

The protein resides in the golgi apparatus membrane. Its subcellular location is the endoplasmic reticulum membrane. Functionally, may play a role in embryonic and postnatal development of the brain. Increased resistance to cell death induced by serum starvation in cultured cells. Regulates cAMP-induced GFAP gene expression via STAT3 phosphorylation. This chain is Transmembrane protein 132A (TMEM132A), found in Homo sapiens (Human).